The following is a 504-amino-acid chain: Maturase K (504 aa).

This sequence belongs to the intron maturase 2 family. MatK subfamily.

The protein localises to the plastid. Its subcellular location is the chloroplast. In terms of biological role, usually encoded in the trnK tRNA gene intron. Probably assists in splicing its own and other chloroplast group II introns. This chain is Maturase K, found in Aruncus dioicus (Goat's beard).